A 78-amino-acid chain; its full sequence is RNA-binding protein KhpA (78 aa).

Residues 29–78 enclose the KH domain; it reads TIIYELTVAKPDIGKIIGKEGRTIKAIRTLLVSVASRNNVKVSLEIMEDK.

The protein belongs to the KhpA RNA-binding protein family.

It is found in the cytoplasm. Functionally, a probable RNA-binding protein. In Chlamydia caviae (strain ATCC VR-813 / DSM 19441 / 03DC25 / GPIC) (Chlamydophila caviae), this protein is RNA-binding protein KhpA.